Consider the following 523-residue polypeptide: MSNRVIIFDTTLRDGEQALAASLTVKEKLQIALSLERLGVDVMEVGFPVSSPGDFKSVETIARTVKNSRVCALARALEKDIDAAAQSLSVADQFRIHTFISTSTIHVESKLKRSFDQVLEMAVGAVKYARRFTDDVEFSCEDAGRTPIDNLCRMVEEAIKAGAKTINIPDTVGYTVPSEFGGIIETLFNRVPNIDQAVISVHCHDDLGLSVANSITAVQQGARQIECTVNGIGERAGNCSLEEIAMILSTRKAALGLETGINAKEIHRTSSLVSQLCNMPVQANKAIVGANAFTHSSGIHQDGMLKSQNTYEIMTPESIGLPRNNLNMTSRSGRHVIKHRMEEMGYGEHDYDMDVLYESFLKLADKKGQVFDYDLEALTFMEAQAEEESFYQLKQLVVHSDSTQGNATATVKIELDGEVVTEAATGNGPVDAAYNAIARASKCEINITSYKLSAKGEGQDALGQVDIEASYQQQSFHGVGLATDVVEASVQALIHVMNLTWRADKVADCKQKIQQKARSLGGV.

Residues 5 to 267 form the Pyruvate carboxyltransferase domain; it reads VIIFDTTLRD…ETGINAKEIH (263 aa). Mn(2+) contacts are provided by Asp14, His202, His204, and Asn238. The interval 392-523 is regulatory domain; sequence QLKQLVVHSD…QQKARSLGGV (132 aa).

Belongs to the alpha-IPM synthase/homocitrate synthase family. LeuA type 1 subfamily. As to quaternary structure, homodimer. Mn(2+) is required as a cofactor.

It is found in the cytoplasm. It catalyses the reaction 3-methyl-2-oxobutanoate + acetyl-CoA + H2O = (2S)-2-isopropylmalate + CoA + H(+). It functions in the pathway amino-acid biosynthesis; L-leucine biosynthesis; L-leucine from 3-methyl-2-oxobutanoate: step 1/4. Catalyzes the condensation of the acetyl group of acetyl-CoA with 3-methyl-2-oxobutanoate (2-ketoisovalerate) to form 3-carboxy-3-hydroxy-4-methylpentanoate (2-isopropylmalate). The protein is 2-isopropylmalate synthase of Shewanella woodyi (strain ATCC 51908 / MS32).